The primary structure comprises 191 residues: uncharacterized protein (191 aa).

2 disordered regions span residues 1 to 42 (MSEE…DADA) and 145 to 191 (QNQE…IDLD). Composition is skewed to basic and acidic residues over residues 11 to 26 (PRPDEADAVDETRATG) and 147 to 178 (QERRWTTGDTAPKDPSDPRDLDERGTDGRDEG).

It may form a heterotetramer of two glucokinase subunits (glk) with two ORF2 proteins.

Its function is as follows. May be involved in glucose transport or metabolism. This is an uncharacterized protein from Streptomyces coelicolor (strain ATCC BAA-471 / A3(2) / M145).